The following is a 512-amino-acid chain: Histidine ammonia-lyase (512 aa).

Positions 146–148 (ASG) form a cross-link, 5-imidazolinone (Ala-Gly). Ser-147 carries the post-translational modification 2,3-didehydroalanine (Ser).

It belongs to the PAL/histidase family. Contains an active site 4-methylidene-imidazol-5-one (MIO), which is formed autocatalytically by cyclization and dehydration of residues Ala-Ser-Gly.

The protein resides in the cytoplasm. The enzyme catalyses L-histidine = trans-urocanate + NH4(+). Its pathway is amino-acid degradation; L-histidine degradation into L-glutamate; N-formimidoyl-L-glutamate from L-histidine: step 1/3. The polypeptide is Histidine ammonia-lyase (Paracidovorax citrulli (strain AAC00-1) (Acidovorax citrulli)).